Consider the following 95-residue polypeptide: Large ribosomal subunit protein uL23 (95 aa).

The protein belongs to the universal ribosomal protein uL23 family. In terms of assembly, part of the 50S ribosomal subunit. Contacts protein L29, and trigger factor when it is bound to the ribosome.

In terms of biological role, one of the early assembly proteins it binds 23S rRNA. One of the proteins that surrounds the polypeptide exit tunnel on the outside of the ribosome. Forms the main docking site for trigger factor binding to the ribosome. This is Large ribosomal subunit protein uL23 from Desulforudis audaxviator (strain MP104C).